We begin with the raw amino-acid sequence, 469 residues long: Glutamate--tRNA ligase (469 aa).

Positions 12–22 match the 'HIGH' region motif; that stretch reads PSPTGFIHLGN. The 'KMSKS' region signature appears at 244–248; the sequence is KMSKR. ATP is bound at residue K247.

This sequence belongs to the class-I aminoacyl-tRNA synthetase family. Glutamate--tRNA ligase type 1 subfamily. In terms of assembly, monomer.

Its subcellular location is the cytoplasm. The catalysed reaction is tRNA(Glu) + L-glutamate + ATP = L-glutamyl-tRNA(Glu) + AMP + diphosphate. Functionally, catalyzes the attachment of glutamate to tRNA(Glu) in a two-step reaction: glutamate is first activated by ATP to form Glu-AMP and then transferred to the acceptor end of tRNA(Glu). This chain is Glutamate--tRNA ligase, found in Acidovorax sp. (strain JS42).